Here is a 293-residue protein sequence, read N- to C-terminus: Elongation factor Ts (293 aa).

The interval 79–82 (TDFV) is involved in Mg(2+) ion dislocation from EF-Tu.

Belongs to the EF-Ts family.

It localises to the cytoplasm. Its function is as follows. Associates with the EF-Tu.GDP complex and induces the exchange of GDP to GTP. It remains bound to the aminoacyl-tRNA.EF-Tu.GTP complex up to the GTP hydrolysis stage on the ribosome. The protein is Elongation factor Ts (tsf) of Halalkalibacterium halodurans (strain ATCC BAA-125 / DSM 18197 / FERM 7344 / JCM 9153 / C-125) (Bacillus halodurans).